The following is a 210-amino-acid chain: Na(+)-translocating NADH-quinone reductase subunit D (210 aa).

5 consecutive transmembrane segments (helical) span residues 42 to 62 (FVMT…VSLI), 72 to 92 (IIVQ…VLKA), 103 to 123 (VFVS…AFAM), 131 to 151 (FIDG…VAFF), and 178 to 198 (NGLM…IWAI).

It belongs to the NqrDE/RnfAE family. In terms of assembly, composed of six subunits; NqrA, NqrB, NqrC, NqrD, NqrE and NqrF.

It is found in the cell inner membrane. It carries out the reaction a ubiquinone + n Na(+)(in) + NADH + H(+) = a ubiquinol + n Na(+)(out) + NAD(+). Functionally, NQR complex catalyzes the reduction of ubiquinone-1 to ubiquinol by two successive reactions, coupled with the transport of Na(+) ions from the cytoplasm to the periplasm. NqrA to NqrE are probably involved in the second step, the conversion of ubisemiquinone to ubiquinol. This chain is Na(+)-translocating NADH-quinone reductase subunit D, found in Aliivibrio fischeri (strain ATCC 700601 / ES114) (Vibrio fischeri).